A 213-amino-acid polypeptide reads, in one-letter code: KHG/KDPG aldolase (213 aa).

Glu-45 acts as the Proton acceptor in catalysis. Pyruvate is bound by residues Arg-49, Thr-73, and Lys-133. Catalysis depends on Lys-133, which acts as the Schiff-base intermediate with substrate.

This sequence belongs to the KHG/KDPG aldolase family. Homotrimer.

The protein localises to the cytoplasm. It catalyses the reaction 2-dehydro-3-deoxy-6-phospho-D-gluconate = D-glyceraldehyde 3-phosphate + pyruvate. It carries out the reaction (4S)-4-hydroxy-2-oxoglutarate = glyoxylate + pyruvate. The protein operates within carbohydrate acid metabolism; 2-dehydro-3-deoxy-D-gluconate degradation; D-glyceraldehyde 3-phosphate and pyruvate from 2-dehydro-3-deoxy-D-gluconate: step 2/2. It participates in carbohydrate metabolism; glyoxylate and dicarboxylate metabolism. Functionally, involved in the degradation of glucose via the Entner-Doudoroff pathway. Catalyzes the reversible, stereospecific retro-aldol cleavage of 2-keto-3-deoxy-6-phosphogluconate (KDPG) to pyruvate and D-glyceraldehyde-3-phosphate. In addition to its KDPG aldolase activity, catalyzes the reversible cleavage of 2-keto-4-hydroxyglutarate (KHG) to glyoxylate and pyruvate. The enzyme is stereoselective for the S-enantiomer of KHG. Cleavage of KHG could serve in tricarboxylic acid (TCA) cycle regulation or, when operating in the reverse direction, in the detoxification of glyoxylate. This Escherichia coli O157:H7 protein is KHG/KDPG aldolase (eda).